The chain runs to 98 residues: Dehydrogenase acuH (98 aa).

It participates in secondary metabolite biosynthesis. Its function is as follows. Dehydrogenase; part of the gene cluster that mediates the biosynthesis of aculins. The pathway begins with the synthesis of 6-methylsalicylic acid by the polyketide synthase (PKS) acuA via condensation of acetate and malonate units. The 6-methylsalicylic acid decarboxylase acuB then catalyzes the decarboxylation of 6-methylsalicylic acid to yield m-cresol (also known as 3-methylphenol). These first reactions occur in the cytosol. The intermediate m-cresol is then transported into the endoplasmic reticulum where the cytochrome P450 monooxygenase acuC converts it to m-hydroxybenzyl alcohol, which is further converted to gentisyl alcohol by the cytochrome P450 monooxygenase acuD. Gentisyl alcohol is further oxidized by the oxidoreductase acuE that probably catalyzes hydroxylation of the aromatic ring. The aromatic system might then be opened by oxidation through a Baeyer-Villiger type of oxidation, which could be catalyzed by acuF, with the carboxylic acid at C-1 subsequently reduced to an aldehyde by acuG. Subsequently, a hemiacetal is formed, before the dehydrogenase acuH would reduce the double bond between C-4 and C-6. Finally, keto-enol tautomerism results in formation of aculinic acid, which exists as two diastereomers (both R/S configurations at C-1) by non-enzymatic hemiacetal formation. The carboxypeptidase acuI could be involved in the linking of aculinic acid to an aculene A moiety produced by the aculene biosynthesis cluster and which leads to the production of aculin A. AcuI may also be involved in the attachment of proline to aculinic acid to form epi-aculins A and B. The protein is Dehydrogenase acuH of Aspergillus aculeatus (strain ATCC 16872 / CBS 172.66 / WB 5094).